A 150-amino-acid chain; its full sequence is Ribonuclease K6 (150 aa).

An N-terminal signal peptide occupies residues 1–23; it reads MVLCFPLLLLLLVLWGPVCLLHA. His38 serves as the catalytic Proton acceptor. 4 disulfide bridges follow: Cys46–Cys104, Cys60–Cys114, Cys78–Cys129, and Cys85–Cys92. An N-linked (GlcNAc...) asparagine glycan is attached at Asn55. Residues 61 to 65 and Lys86 each bind substrate; that span reads KHQNT. Residue Asn100 is glycosylated (N-linked (GlcNAc...) asparagine). Residue Arg105 coordinates substrate. The active-site Proton donor is the His145.

The protein belongs to the pancreatic ribonuclease family. As to quaternary structure, interacts (via N-terminus) with bacterial lipopolysaccharide (LPS).

The protein localises to the secreted. Its subcellular location is the lysosome. It localises to the cytoplasmic granule. In terms of biological role, ribonuclease which shows a preference for the pyrimidines uridine and cytosine. Has potent antibacterial activity against a range of Gram-positive and Gram-negative bacteria, including P.aeruginosa, A.baumanii, M.luteus, S.aureus, E.faecalis, E.faecium, S.saprophyticus and E.coli. Causes loss of bacterial membrane integrity, and also promotes agglutination of Gram-negative bacteria. Probably contributes to urinary tract sterility. Bactericidal activity is independent of RNase activity. The chain is Ribonuclease K6 (RNASE6) from Chlorocebus aethiops (Green monkey).